The sequence spans 70 residues: ATP synthase subunit c (70 aa).

2 helical membrane-spanning segments follow: residues 5 to 25 (AAAI…GLIV) and 47 to 67 (FIGV…AFMV).

Belongs to the ATPase C chain family. In terms of assembly, F-type ATPases have 2 components, F(1) - the catalytic core - and F(0) - the membrane proton channel. F(1) has five subunits: alpha(3), beta(3), gamma(1), delta(1), epsilon(1). F(0) has three main subunits: a(1), b(2) and c(10-14). The alpha and beta chains form an alternating ring which encloses part of the gamma chain. F(1) is attached to F(0) by a central stalk formed by the gamma and epsilon chains, while a peripheral stalk is formed by the delta and b chains.

The protein localises to the cell membrane. Functionally, f(1)F(0) ATP synthase produces ATP from ADP in the presence of a proton or sodium gradient. F-type ATPases consist of two structural domains, F(1) containing the extramembraneous catalytic core and F(0) containing the membrane proton channel, linked together by a central stalk and a peripheral stalk. During catalysis, ATP synthesis in the catalytic domain of F(1) is coupled via a rotary mechanism of the central stalk subunits to proton translocation. Key component of the F(0) channel; it plays a direct role in translocation across the membrane. A homomeric c-ring of between 10-14 subunits forms the central stalk rotor element with the F(1) delta and epsilon subunits. The sequence is that of ATP synthase subunit c from Anoxybacillus flavithermus (strain DSM 21510 / WK1).